Consider the following 529-residue polypeptide: Peptide chain release factor 3 (529 aa).

Positions 10-278 (ARRRTFAIIS…MFVEFAPGPQ (269 aa)) constitute a tr-type G domain. GTP is bound by residues 19–26 (SHPDAGKT), 87–91 (DTPGH), and 141–144 (NKMD).

The protein belongs to the TRAFAC class translation factor GTPase superfamily. Classic translation factor GTPase family. PrfC subfamily.

The protein localises to the cytoplasm. Its function is as follows. Increases the formation of ribosomal termination complexes and stimulates activities of RF-1 and RF-2. It binds guanine nucleotides and has strong preference for UGA stop codons. It may interact directly with the ribosome. The stimulation of RF-1 and RF-2 is significantly reduced by GTP and GDP, but not by GMP. This Nitratidesulfovibrio vulgaris (strain DSM 19637 / Miyazaki F) (Desulfovibrio vulgaris) protein is Peptide chain release factor 3.